The sequence spans 289 residues: Transmembrane protein 163 (289 aa).

The segment at 1–65 (MEPAAGIQRR…ESGQFSDGLE (65 aa)) is disordered. The Cytoplasmic segment spans residues 1–88 (MEPAAGIQRR…HEAQNYRKKA (88 aa)). Ser11 carries the post-translational modification Phosphoserine. Residues 16-36 (TVPPPPRGHAPPAAAPGPAPL) show a composition bias toward pro residues. The interval 42-72 (EPPQLEEERQVRISESGQFSDGLEDRGLLES) is required for interaction with MCOLN1. Phosphoserine is present on residues Ser55, Ser57, and Ser61. Residues 89-109 (LWVSWFSIIVTLALAVAAFTV) form a helical membrane-spanning segment. Residues 110–116 (SVMRYSA) lie on the Extracellular side of the membrane. The chain crosses the membrane as a helical span at residues 117-137 (SAFGFAFDAILDVLSSAIVLW). The Cytoplasmic segment spans residues 138-150 (RYSNAAAVHSAHR). Residues 151 to 171 (EYIACVILGVIFLLSSICIVV) traverse the membrane as a helical segment. The Extracellular portion of the chain corresponds to 172–187 (KAIHDLSTRLLPEVDD). Residues 188-208 (FLFSVSILSGILCSILAVLKF) traverse the membrane as a helical segment. The Cytoplasmic segment spans residues 209–217 (MLGKVLTSR). Residues 218–238 (ALITDGFNSLVGGVMGFSILL) form a helical membrane-spanning segment. Residues 239-255 (SAEVFKHDSAVWYLDGS) are Extracellular-facing. Residues 256–276 (IGVLIGLTIFAYGVKLLIDMV) traverse the membrane as a helical segment. Residues 277-289 (PRVRQTRHYEMFE) are Cytoplasmic-facing.

This sequence belongs to the TMEM163 family. As to quaternary structure, homodimer. Interacts with MCOLN1/TRPML1. Interacts with SLC30A1, SLC30A2, SLC30A3 and SLC30A4. Widely expressed. High expression is detected in brain, lung and testis.

It localises to the cytoplasmic vesicle. The protein resides in the secretory vesicle. It is found in the synaptic vesicle membrane. The protein localises to the early endosome membrane. Its subcellular location is the late endosome membrane. It localises to the lysosome membrane. The protein resides in the cell membrane. The catalysed reaction is Zn(2+)(in) = Zn(2+)(out). Functionally, zinc ion transporter that mediates zinc efflux and plays a crucial role in intracellular zinc homeostasis. Binds the divalent cations Zn(2+), Ni(2+), and to a minor extent Cu(2+). Is a functional modulator of P2X purinoceptors, including P2RX1, P2RX3, P2RX4 and P2RX7. Plays a role in central nervous system development and is required for myelination, and survival and proliferation of oligodendrocytes. The sequence is that of Transmembrane protein 163 (TMEM163) from Homo sapiens (Human).